Reading from the N-terminus, the 160-residue chain is uncharacterized protein (160 aa).

The N-acetyltransferase domain maps to 2–140; the sequence is MIIIPNNEIA…KARRLKPEIP (139 aa).

This is an uncharacterized protein from Bacillus subtilis (strain 168).